The sequence spans 80 residues: Large ribosomal subunit protein uL29 (80 aa).

The protein belongs to the universal ribosomal protein uL29 family.

This chain is Large ribosomal subunit protein uL29, found in Mycobacterium marinum (strain ATCC BAA-535 / M).